Reading from the N-terminus, the 153-residue chain is Myosin regulatory light chain (153 aa).

Ala1 is modified (blocked amino end (Ala)). 2 consecutive EF-hand domains span residues 15 to 50 and 81 to 116; these read KQIQ…LGRT and DSEE…MGNN. 4 residues coordinate Ca(2+): Asp28, Asp30, Asp32, and Asp39.

Its function is as follows. In molluscan muscle, calcium regulation is associated with myosin rather than with actin. Muscle myosin contains two types of light chains: the catalytic light chain, essential for ATPase activity, and the regulatory light chain, a calcium-binding protein responsible for Ca(2+) dependent binding and Ca(2+) dependent Mg-ATPase activity. The sequence is that of Myosin regulatory light chain from Patinopecten sp. (Scallop).